We begin with the raw amino-acid sequence, 620 residues long: Eukaryotic translation initiation factor 2-alpha kinase 1 (620 aa).

Residues 1 to 38 (MLGGGSVDGERDTDDDAAGAVAAPPAIDFPAEVSDPKY) are disordered. Positions 18–28 (AGAVAAPPAID) are enriched in low complexity. The SIFI-degron motif lies at 85–104 (LHSKQVFKLLCQTFIKMGLL). A Protein kinase domain is found at 167-581 (FEELAILGKG…ALQLLQSELF (415 aa)). Residues 173–181 (LGKGGYGRV) and lysine 196 each bind ATP. Threonine 283 is modified (phosphothreonine). Residues 408–413 (ACPYVM) form an HRM 1 repeat. Catalysis depends on aspartate 440, which acts as the Proton acceptor. Phosphothreonine; by autocatalysis occurs at positions 484 and 486. Threonine 491 is modified (phosphothreonine). Residues 550–555 (RCPVQA) form an HRM 2 repeat.

The protein belongs to the protein kinase superfamily. Ser/Thr protein kinase family. GCN2 subfamily. In terms of assembly, synthesized in an inactive form that binds to the N-terminal domain of CDC37. Has to be associated with a multiprotein complex containing Hsp90, CDC37 and PPP5C for maturation and activation by autophosphorylation. The phosphatase PPP5C modulates this activation. Homodimer; homodimerizes in presence of heme, forming a disulfide-linked inactive homodimer. Interacts with DELE1; binds both to full-length DELE1 and processed form of DELE1 (S-DELE1) in response to stress, leading to activate its protein kinase activity and trigger the integrated stress response (ISR). Post-translationally, activated by autophosphorylation; phosphorylated predominantly on serine and threonine residues, but also on tyrosine residues. Autophosphorylation at Thr-486 is required for kinase activation. The active autophosphorylated form apparently is largely refractory to cellular heme fluctuations. Ubiquitinated and degraded by the SIFI complex once the mitochondrial stress has been resolved, thereby providing stress response silencing. Within the SIFI complex, UBR4 initiates ubiquitin chain that are further elongated or branched by KCMF1.

The protein localises to the cytoplasm. It catalyses the reaction L-seryl-[protein] + ATP = O-phospho-L-seryl-[protein] + ADP + H(+). It carries out the reaction L-threonyl-[protein] + ATP = O-phospho-L-threonyl-[protein] + ADP + H(+). Its activity is regulated as follows. In normal conditions, the protein kinase activity is inhibited; inhibition is relieved by various stress conditions. Inhibited by heme: in presence of heme, forms a disulfide-linked inactive homodimer. Heme depletion relieves inhibition and stimulates kinase activity by autophosphorylation. Inhibited by the heme metabolites biliverdin and bilirubin. Induced by oxidative stress generated by arsenite treatment. Binding of nitric oxide (NO) to the heme iron in the N-terminal heme-binding domain activates the kinase activity, while binding of carbon monoxide (CO) suppresses kinase activity. Protein kinase activity is also activated upon binding to DELE1 in response to various stress, triggering the integrated stress response (ISR): activated by full-length DELE1 in response to iron deficiency, while it is activated by the processed form of DELE1 (S-DELE1) in response to mitochondrial stress. In terms of biological role, metabolic-stress sensing protein kinase that phosphorylates the alpha subunit of eukaryotic translation initiation factor 2 (EIF2S1/eIF-2-alpha) in response to various stress conditions. Key activator of the integrated stress response (ISR) required for adaptation to various stress, such as heme deficiency, oxidative stress, osmotic shock, mitochondrial dysfunction and heat shock. EIF2S1/eIF-2-alpha phosphorylation in response to stress converts EIF2S1/eIF-2-alpha in a global protein synthesis inhibitor, leading to a global attenuation of cap-dependent translation, while concomitantly initiating the preferential translation of ISR-specific mRNAs, such as the transcriptional activator ATF4, and hence allowing ATF4-mediated reprogramming. Acts as a key sensor of heme-deficiency: in normal conditions, binds hemin via a cysteine thiolate and histidine nitrogenous coordination, leading to inhibit the protein kinase activity. This binding occurs with moderate affinity, allowing it to sense the heme concentration within the cell: heme depletion relieves inhibition and stimulates kinase activity, activating the ISR. Thanks to this unique heme-sensing capacity, plays a crucial role to shut off protein synthesis during acute heme-deficient conditions. In red blood cells (RBCs), controls hemoglobin synthesis ensuring a coordinated regulation of the synthesis of its heme and globin moieties. It thereby plays an essential protective role for RBC survival in anemias of iron deficiency. Iron deficiency also triggers activation by full-length DELE1. Also activates the ISR in response to mitochondrial dysfunction: HRI/EIF2AK1 protein kinase activity is activated upon binding to the processed form of DELE1 (S-DELE1), thereby promoting the ATF4-mediated reprogramming. Also acts as an activator of mitophagy in response to mitochondrial damage: catalyzes phosphorylation of eIF-2-alpha (EIF2S1) following activation by S-DELE1, thereby promoting mitochondrial localization of EIF2S1, triggering PRKN-independent mitophagy. This is Eukaryotic translation initiation factor 2-alpha kinase 1 from Rattus norvegicus (Rat).